A 397-amino-acid chain; its full sequence is Phosphoglycerate kinase (397 aa).

Residues 21 to 23 (DFN), Arg-37, 60 to 63 (HLGR), Arg-119, and Arg-152 each bind substrate. ATP contacts are provided by residues Lys-203, Gly-294, Glu-325, and 354 to 357 (GGDS).

The protein belongs to the phosphoglycerate kinase family. In terms of assembly, monomer.

The protein resides in the cytoplasm. The enzyme catalyses (2R)-3-phosphoglycerate + ATP = (2R)-3-phospho-glyceroyl phosphate + ADP. It participates in carbohydrate degradation; glycolysis; pyruvate from D-glyceraldehyde 3-phosphate: step 2/5. This Chlorobium phaeobacteroides (strain DSM 266 / SMG 266 / 2430) protein is Phosphoglycerate kinase.